We begin with the raw amino-acid sequence, 414 residues long: 3-oxoacyl-[acyl-carrier-protein] synthase 2 (414 aa).

A Ketosynthase family 3 (KS3) domain is found at 4-411 (NKRVVITGMG…GHNAVLVFKK (408 aa)). Catalysis depends on for beta-ketoacyl synthase activity residues cysteine 165, histidine 304, and histidine 341.

It belongs to the thiolase-like superfamily. Beta-ketoacyl-ACP synthases family.

The catalysed reaction is a fatty acyl-[ACP] + malonyl-[ACP] + H(+) = a 3-oxoacyl-[ACP] + holo-[ACP] + CO2. It catalyses the reaction (9Z)-hexadecenoyl-[ACP] + malonyl-[ACP] + H(+) = 3-oxo-(11Z)-octadecenoyl-[ACP] + holo-[ACP] + CO2. It participates in lipid metabolism; fatty acid biosynthesis. In terms of biological role, involved in the type II fatty acid elongation cycle. Catalyzes the elongation of a wide range of acyl-ACP by the addition of two carbons from malonyl-ACP to an acyl acceptor. Can efficiently catalyze the conversion of palmitoleoyl-ACP (cis-hexadec-9-enoyl-ACP) to cis-vaccenoyl-ACP (cis-octadec-11-enoyl-ACP), an essential step in the thermal regulation of fatty acid composition. The sequence is that of 3-oxoacyl-[acyl-carrier-protein] synthase 2 (fabF) from Staphylococcus aureus (strain MW2).